A 961-amino-acid chain; its full sequence is MAERGGAGGGPGGAGGGSSQRGSGVAQSPQQQPPQQPSQPQQPTPPKLAQATSSSSSTSAAAASSSSSSTSTSMAVAVASGSAPPGGPGPGRTPAPVQMNLYATWEVDRSSSSCVPRLFSLTLKKLVMLKEMDKDLNSVVIAVKLQGSKRILRSNEIILPASGLVETELQLTFSLQYPHFLKRDANKLQIMLQRRKRYKNRTILGYKTLAVGLINMAEVMQHPNEGALVLGLHSNVKDVSVPVAEIKIYSLSSQPIDHEGIKSKLSDRSPDIDNYSEEEEESFSSEQEGSDDPLHGQDLFYEDEDLRKVKKTRRKLTSTSAITRQPNIKQKFVALLKRFKVSDEVGFGLEHVSREQIREVEEDLDELYDSLEMYNPSDSGPEMEETESILSTPKPKLKPFFEGMSQSSSQTEIGSLNSKGSLGKDTTSPMELAALEKVKSTWIKNQDDSLTETDTLEITDQDMFGDASTSLVVPEKVKTPMKSSKADLQGSASPSKVEGTHTPRQKRSTPLKERQLSKPLSERTNSSDSERSPDLGHSTQIPRKVVYDQLNQILVSDAALPENVILVNTTDWQGQYVAELLQDQRKPVVCTCSTVEVQAVLSALLTRIQRYCNCNSSMPRPVKVAAVGSQSYLSSILRFFVKSLASKTPDWLGHMRFLIVPLGSHPVAKYLGSVDSRYSSTFLDSAWRDLFSRSEPPVSEPLDVVGRVMQYVNGATTTHQLPVAEAMLTCRHKFPDEDSYQKFIPFIGVVKVGLVEDSPSTAGDGDDSPVVSLTVPSTSPPSSSGLSRDATATPPSSPSMSSALAIVGSPNSPYGDVIGLQVDYWLGHPGERRREGDKRDASSKNTLKSVFRSVQVSRLPHAGEAQLSGTMAMTVVTKEKNKKVPTIFLSKKPREKEVDSKSQVIEGISRLICSAKQQQTMLRVSIDGVEWSDIKFFQLAAQWPTHVKHFPVGLFSGSKPT.

Over residues 1–19 the composition is skewed to gly residues; the sequence is MAERGGAGGGPGGAGGGSS. 2 disordered regions span residues 1-70 and 76-95; these read MAER…SSST and VAVASGSAPPGGPGPGRTPA. Position 2 is an N-acetylalanine (A2). Residues 20-30 are compositionally biased toward low complexity; that stretch reads QRGSGVAQSPQ. Position 28 is a phosphoserine (S28). Residues 31–46 are compositionally biased toward pro residues; sequence QQPPQQPSQPQQPTPP. T44 is subject to Phosphothreonine. Positions 51–70 are enriched in low complexity; it reads ATSSSSSTSAAAASSSSSST. Phosphotyrosine is present on Y249. Residues 260-271 are compositionally biased toward basic and acidic residues; sequence GIKSKLSDRSPD. 2 disordered regions span residues 260-297 and 375-426; these read GIKSKLSDRSPDIDNYSEEEEESFSSEQEGSDDPLHGQ and NPSD…GKDT. A compositionally biased stretch (acidic residues) spans 274 to 291; sequence NYSEEEEESFSSEQEGSD. The stretch at 351-375 forms a coiled coil; sequence HVSREQIREVEEDLDELYDSLEMYN. A phosphoserine mark is found at S377 and S379. The segment covering 404–426 has biased composition (polar residues); that stretch reads MSQSSSQTEIGSLNSKGSLGKDT. A phosphoserine mark is found at S428 and S493. 2 disordered regions span residues 475–540 and 758–802; these read EKVK…HSTQ and SPST…SMSS. Phosphothreonine is present on T502. Phosphoserine is present on residues S517, S526, S527, S529, and S532. Positions 768-802 are enriched in low complexity; that stretch reads SPVVSLTVPSTSPPSSSGLSRDATATPPSSPSMSS.

It belongs to the PACS family. In terms of assembly, associates with AP-1 and AP-3 but not with AP-2 complexes. Interacts with FURIN. Forms a ternary complex with furin and AP-1. Interacts with PKD2 (via acidic region). Interacts with SORL1. Interacts with WDR37.

It is found in the golgi apparatus. The protein resides in the trans-Golgi network. Functionally, coat protein that is involved in the localization of trans-Golgi network (TGN) membrane proteins that contain acidic cluster sorting motifs. Controls the endosome-to-Golgi trafficking of furin and mannose-6-phosphate receptor by connecting the acidic-cluster-containing cytoplasmic domain of these molecules with the adapter-protein complex-1 (AP-1) of endosomal clathrin-coated membrane pits. Required for normal ER Ca2+ handling in lymphocytes. Together with WDR37, it plays an essential role in lymphocyte development, quiescence and survival. Required for stabilizing peripheral lymphocyte populations. In Rattus norvegicus (Rat), this protein is Phosphofurin acidic cluster sorting protein 1 (Pacs1).